Reading from the N-terminus, the 219-residue chain is Small ribosomal subunit protein uS3 (219 aa).

A KH type-2 domain is found at Val-38–Lys-106.

The protein belongs to the universal ribosomal protein uS3 family. Part of the 30S ribosomal subunit. Forms a tight complex with proteins S10 and S14.

Binds the lower part of the 30S subunit head. Binds mRNA in the 70S ribosome, positioning it for translation. The chain is Small ribosomal subunit protein uS3 from Desulfitobacterium hafniense (strain DSM 10664 / DCB-2).